Here is a 544-residue protein sequence, read N- to C-terminus: Rubrofusarin-specific efflux pump aurT (544 aa).

A compositionally biased stretch (basic and acidic residues) spans 1–12; it reads MTDNTDMEKLDR. Residues 1 to 42 form a disordered region; the sequence is MTDNTDMEKLDRATTPTPIPNEAPPTSEPSESKPEEAEDESK. A compositionally biased stretch (pro residues) spans 17–27; sequence TPIPNEAPPTS. Basic and acidic residues predominate over residues 30–42; it reads SESKPEEAEDESK. 8 consecutive transmembrane segments (helical) span residues 45–65, 89–111, 116–136, 146–166, 177–197, 205–225, 246–266, and 276–296; these read HGLK…LVAL, WYAS…IFTF, TVYL…GVAP, AIAG…ITTV, GMMG…GGAF, WCFY…ILLF, WGNL…QWGG, and IVAL…IQIW. The N-linked (GlcNAc...) asparagine glycan is linked to N300. Transmembrane regions (helical) follow at residues 318–338, 357–377, 380–400, 407–427, 444–464, and 514–534; these read IFAF…PIWF, VLSL…VGWF, VFFS…TFVV, WIGY…LASL, LMFF…QAVF, and YFYV…GIEW.

Belongs to the major facilitator superfamily. TCR/Tet family.

It localises to the cell membrane. Its pathway is pigment biosynthesis. Its function is as follows. Rubrofusarin-specific efflux pump; part of the gene cluster that mediates the biosynthesis of aurofusarin, a red mycelium pigment which is acting as a mycotoxin. The first step is performed by the polyketide synthase which condenses one acetyl-CoA and 6 malonyl-CoA units to form the first intermediate, the cyclic heptaketide and yellow pigment YWA1. The C2 hydroxyl group in the pyrone ring of YWA1 is probably formed during ring closure by an aldol-type cyclization reaction. The dehydratase aurZ then acts as the first tailoring enzyme in the aurofusarin biosynthetic pathway by converting YWA1 to nor-rubrofusarin. Nor-rubrofusarin is then methylated to rubrofusarin by the O-methyltransferase aurJ. Rubrofusarin is then transported across the plasma membrane by the rubrofusarin-specific pump aurT for further enzymatic processing by the extracellular complex composed of GIP1, aurF, aurO and aurS to yield aurofusarin. The chain is Rubrofusarin-specific efflux pump aurT from Gibberella zeae (strain ATCC MYA-4620 / CBS 123657 / FGSC 9075 / NRRL 31084 / PH-1) (Wheat head blight fungus).